Reading from the N-terminus, the 400-residue chain is Acetate kinase (400 aa).

Mg(2+) is bound at residue asparagine 7. Lysine 14 provides a ligand contact to ATP. A substrate-binding site is contributed by arginine 91. The active-site Proton donor/acceptor is aspartate 148. Residues 208–212, 283–285, and 332–336 each bind ATP; these read HIGNG, DFR, and GIGEH. Glutamate 387 is a Mg(2+) binding site.

Belongs to the acetokinase family. As to quaternary structure, homodimer. The cofactor is Mg(2+). Requires Mn(2+) as cofactor.

It localises to the cytoplasm. It catalyses the reaction acetate + ATP = acetyl phosphate + ADP. Its pathway is metabolic intermediate biosynthesis; acetyl-CoA biosynthesis; acetyl-CoA from acetate: step 1/2. In terms of biological role, catalyzes the formation of acetyl phosphate from acetate and ATP. Can also catalyze the reverse reaction. This Clostridium beijerinckii (strain ATCC 51743 / NCIMB 8052) (Clostridium acetobutylicum) protein is Acetate kinase.